The chain runs to 308 residues: Endonuclease G, mitochondrial (308 aa).

The active-site Proton acceptor is His148. Position 180 (Asn180) interacts with Mg(2+).

Belongs to the DNA/RNA non-specific endonuclease family. As to quaternary structure, homodimer; disulfide-linked. Interacts with crn-5, crn-4, crn-1 and cyn-13. Requires Mg(2+) as cofactor.

Its subcellular location is the mitochondrion. Functionally, endonuclease important for programmed cell death; it mediates apoptotic DNA fragmentation. The polypeptide is Endonuclease G, mitochondrial (cps-6) (Caenorhabditis elegans).